The primary structure comprises 628 residues: Phosphomethylpyrimidine synthase (628 aa).

Substrate contacts are provided by residues N225, M254, Y283, H319, 339-341 (SRG), 380-383 (DGLR), and E419. Residue H423 participates in Zn(2+) binding. Y446 lines the substrate pocket. H487 lines the Zn(2+) pocket. The [4Fe-4S] cluster site is built by C567, C570, and C575.

It belongs to the ThiC family. In terms of assembly, homodimer. Requires [4Fe-4S] cluster as cofactor.

It carries out the reaction 5-amino-1-(5-phospho-beta-D-ribosyl)imidazole + S-adenosyl-L-methionine = 4-amino-2-methyl-5-(phosphooxymethyl)pyrimidine + CO + 5'-deoxyadenosine + formate + L-methionine + 3 H(+). It functions in the pathway cofactor biosynthesis; thiamine diphosphate biosynthesis. Its function is as follows. Catalyzes the synthesis of the hydroxymethylpyrimidine phosphate (HMP-P) moiety of thiamine from aminoimidazole ribotide (AIR) in a radical S-adenosyl-L-methionine (SAM)-dependent reaction. The chain is Phosphomethylpyrimidine synthase from Leptothrix cholodnii (strain ATCC 51168 / LMG 8142 / SP-6) (Leptothrix discophora (strain SP-6)).